A 1279-amino-acid chain; its full sequence is ATP-dependent helicase/nuclease subunit A (1279 aa).

The region spanning T4–R499 is the UvrD-like helicase ATP-binding domain. Residue A25 to T32 coordinates ATP. The 328-residue stretch at E526 to G853 folds into the UvrD-like helicase C-terminal domain.

It belongs to the helicase family. AddA subfamily. Heterodimer of AddA and AddB/RexB. Mg(2+) is required as a cofactor.

The enzyme catalyses Couples ATP hydrolysis with the unwinding of duplex DNA by translocating in the 3'-5' direction.. It carries out the reaction ATP + H2O = ADP + phosphate + H(+). Functionally, the heterodimer acts as both an ATP-dependent DNA helicase and an ATP-dependent, dual-direction single-stranded exonuclease. Recognizes the chi site generating a DNA molecule suitable for the initiation of homologous recombination. The AddA nuclease domain is required for chi fragment generation; this subunit has the helicase and 3' -&gt; 5' nuclease activities. In Clostridium botulinum (strain Langeland / NCTC 10281 / Type F), this protein is ATP-dependent helicase/nuclease subunit A.